The sequence spans 516 residues: Facilitated glucose transporter homolog (516 aa).

The segment at 1–37 (MNAVVASQNKNDRSFSNMESESSSNVEKSEKENHHQS) is disordered. The Cytoplasmic portion of the chain corresponds to 1–47 (MNAVVASQNKNDRSFSNMESESSSNVEKSEKENHHQSLPDENWTPFL). A compositionally biased stretch (low complexity) spans 14–26 (SFSNMESESSSNV). Residues 27 to 37 (EKSEKENHHQS) are compositionally biased toward basic and acidic residues. A helical transmembrane segment spans residues 48–68 (FFCISSIALASFQDGFQIGCI). The Extracellular segment spans residues 69–101 (NAPGPLIIDWIKKCHFELFGEVLSQYQADFIWS). Residues 102–122 (VAVSMFSVGGMFGSFCSGFLA) form a helical membrane-spanning segment. Topologically, residues 123 to 138 (DKFGRKSTLLYNNILA) are cytoplasmic. A helical membrane pass occupies residues 139-159 (LLAAVCLSTSKLFNFYPMIVF). At 160-161 (GR) the chain is on the extracellular side. A helical transmembrane segment spans residues 162 to 182 (FLVGLNCGITSGLVPMFLTEL). Over 183–200 (APANLRGKCGSFHQLNIS) the chain is Cytoplasmic. The helical transmembrane segment at 201–221 (VAIVLSQALGLPQIFGTQVGW) threads the bilayer. Pro222 is a topological domain (extracellular). The chain crosses the membrane as a helical span at residues 223–243 (YIFACVAIPTFLQLATIPFCV). Residues 244 to 306 (ESPKYLISKL…SLFKGDNQWP (63 aa)) are Cytoplasmic-facing. The chain crosses the membrane as a helical span at residues 307–327 (MIVSILMMFSQQFSGISAVTF). Topologically, residues 328-344 (YSTLIFKRNGLSGNEPM) are extracellular. A helical transmembrane segment spans residues 345–365 (YATVGFGCIKLIATFGCLFLI). The Cytoplasmic segment spans residues 366-376 (DHPKFGRKRLH). Residues 377–397 (IAGLSGMCISSILIVITLTLS) form a helical membrane-spanning segment. The Extracellular portion of the chain corresponds to 398 to 409 (NAGYHWASYMNV). A helical transmembrane segment spans residues 410–430 (LFILSFVVTFAFGPGPIPWFF). Residues 431–444 (TSELFDSATRGRAA) lie on the Cytoplasmic side of the membrane. A helical membrane pass occupies residues 445–465 (AVSATSNWVANWMVGLTFLPI). The Extracellular portion of the chain corresponds to 466 to 471 (NNIIHQ). A helical transmembrane segment spans residues 472 to 492 (YAFLMFTFFTFTFAIFTWKFV). Topologically, residues 493–516 (PETKGKSPSAIRKELAFMRKRICS) are cytoplasmic.

The protein belongs to the major facilitator superfamily. Sugar transporter (TC 2.A.1.1) family. Expressed in seam cells from the early embryonic stage through the L2 stage (at protein level).

The protein resides in the cell membrane. Appears to have no transport activity for glucose. The sequence is that of Facilitated glucose transporter homolog from Caenorhabditis elegans.